Consider the following 169-residue polypeptide: Regulator of sigma D (169 aa).

This sequence belongs to the Rsd/AlgQ family. As to quaternary structure, interacts with RpoD.

It localises to the cytoplasm. Its function is as follows. Binds RpoD and negatively regulates RpoD-mediated transcription activation by preventing the interaction between the primary sigma factor RpoD with the catalytic core of the RNA polymerase and with promoter DNA. May be involved in replacement of the RNA polymerase sigma subunit from RpoD to RpoS during the transition from exponential growth to the stationary phase. This Yersinia pestis protein is Regulator of sigma D.